Reading from the N-terminus, the 787-residue chain is Pyridoxal-dependent decarboxylase domain-containing protein 1 (787 aa).

The span at 29–41 (EDSQRRTEEENGK) shows a compositional bias: basic and acidic residues. The tract at residues 29-52 (EDSQRRTEEENGKKLLSGDIPGPL) is disordered. Serine 653 carries the phosphoserine modification. Residues 683 to 787 (QGSGVTPPQT…PQVEEPESLR (105 aa)) are disordered. Positions 685–697 (SGVTPPQTPTGTR) are enriched in polar residues. 2 positions are modified to phosphothreonine: threonine 688 and threonine 692. A phosphoserine mark is found at serine 711, serine 719, and serine 723. Residues 735-745 (QSSGGQEASEA) are compositionally biased toward polar residues. Residues serine 747 and serine 785 each carry the phosphoserine modification. Residues 774–787 (QDDRPQVEEPESLR) show a composition bias toward basic and acidic residues.

This sequence belongs to the group II decarboxylase family. Requires pyridoxal 5'-phosphate as cofactor.

This Bos taurus (Bovine) protein is Pyridoxal-dependent decarboxylase domain-containing protein 1 (PDXDC1).